Reading from the N-terminus, the 547-residue chain is ATP synthase subunit alpha (547 aa).

172–179 (GDRKTGKT) contacts ATP.

Belongs to the ATPase alpha/beta chains family. In terms of assembly, F-type ATPases have 2 components, CF(1) - the catalytic core - and CF(0) - the membrane proton channel. CF(1) has five subunits: alpha(3), beta(3), gamma(1), delta(1), epsilon(1). CF(0) has three main subunits: a(1), b(2) and c(9-12). The alpha and beta chains form an alternating ring which encloses part of the gamma chain. CF(1) is attached to CF(0) by a central stalk formed by the gamma and epsilon chains, while a peripheral stalk is formed by the delta and b chains.

It localises to the cell membrane. The catalysed reaction is ATP + H2O + 4 H(+)(in) = ADP + phosphate + 5 H(+)(out). Its function is as follows. Produces ATP from ADP in the presence of a proton gradient across the membrane. The alpha chain is a regulatory subunit. The sequence is that of ATP synthase subunit alpha from Rhodococcus jostii (strain RHA1).